The primary structure comprises 76 residues: Large ribosomal subunit protein uL29 (76 aa).

It belongs to the universal ribosomal protein uL29 family.

The chain is Large ribosomal subunit protein uL29 from Corynebacterium efficiens (strain DSM 44549 / YS-314 / AJ 12310 / JCM 11189 / NBRC 100395).